We begin with the raw amino-acid sequence, 178 residues long: MLEGIIRESISKSAVKALRNDGYLIANIYGKGQENTHCAFKKNDFIRAVKSKTNIIFPVKVGGKEINVVVQEYQKDPITSDLLHVDLMLVQPGVETKFLVPVKTAGSAKGLKNKGVLILSKKRVKVKCSPENLPASYELDVSDLDVGDAILVRDLPELPNVKVIEKESVAIVGVIKAK.

The protein belongs to the bacterial ribosomal protein bL25 family. CTC subfamily. Part of the 50S ribosomal subunit; part of the 5S rRNA/L5/L18/L25 subcomplex. Contacts the 5S rRNA. Binds to the 5S rRNA independently of L5 and L18.

In terms of biological role, this is one of the proteins that binds to the 5S RNA in the ribosome where it forms part of the central protuberance. The protein is Large ribosomal subunit protein bL25 of Wolinella succinogenes (strain ATCC 29543 / DSM 1740 / CCUG 13145 / JCM 31913 / LMG 7466 / NCTC 11488 / FDC 602W) (Vibrio succinogenes).